The sequence spans 62 residues: Large ribosomal subunit protein uL30 (62 aa).

This sequence belongs to the universal ribosomal protein uL30 family. Part of the 50S ribosomal subunit.

This Staphylococcus carnosus (strain TM300) protein is Large ribosomal subunit protein uL30.